Here is a 562-residue protein sequence, read N- to C-terminus: Glutamine--tRNA ligase (562 aa).

The 'HIGH' region signature appears at 35–45 (PEPNGYLHIGH). ATP is bound by residues 36–38 (EPN) and 42–48 (HIGHAKS). Positions 68 and 213 each coordinate L-glutamine. ATP is bound by residues Thr232 and 264 to 265 (RL). The short motif at 271 to 275 (ITSKR) is the 'KMSKS' region element.

The protein belongs to the class-I aminoacyl-tRNA synthetase family. Monomer.

It localises to the cytoplasm. The catalysed reaction is tRNA(Gln) + L-glutamine + ATP = L-glutaminyl-tRNA(Gln) + AMP + diphosphate. This Neisseria meningitidis serogroup A / serotype 4A (strain DSM 15465 / Z2491) protein is Glutamine--tRNA ligase.